The primary structure comprises 395 residues: S-adenosylmethionine synthase (395 aa).

An ATP-binding site is contributed by His14. Position 16 (Asp16) interacts with Mg(2+). K(+) is bound at residue Glu42. L-methionine-binding residues include Glu55 and Gln98. The tract at residues 98–108 (QSPDIAMGVDK) is flexible loop. ATP-binding positions include 175–177 (DGK), 242–243 (RF), Asp251, 257–258 (RK), Ala274, and Lys278. Asp251 is an L-methionine binding site. Lys282 contacts L-methionine.

The protein belongs to the AdoMet synthase family. Homotetramer; dimer of dimers. Requires Mg(2+) as cofactor. It depends on K(+) as a cofactor.

It is found in the cytoplasm. The catalysed reaction is L-methionine + ATP + H2O = S-adenosyl-L-methionine + phosphate + diphosphate. It functions in the pathway amino-acid biosynthesis; S-adenosyl-L-methionine biosynthesis; S-adenosyl-L-methionine from L-methionine: step 1/1. Its function is as follows. Catalyzes the formation of S-adenosylmethionine (AdoMet) from methionine and ATP. The overall synthetic reaction is composed of two sequential steps, AdoMet formation and the subsequent tripolyphosphate hydrolysis which occurs prior to release of AdoMet from the enzyme. This is S-adenosylmethionine synthase from Thermosipho melanesiensis (strain DSM 12029 / CIP 104789 / BI429).